We begin with the raw amino-acid sequence, 282 residues long: Ermin (282 aa).

2 stretches are compositionally biased toward polar residues: residues 1-12 and 21-30; these read MTDTPVTLSGSE and NGQQPSSQTR. Residues 1–71 are disordered; the sequence is MTDTPVTLSG…NSKGNVLPRG (71 aa). S72, S212, S224, S228, and S231 each carry phosphoserine. Residues 212 to 224 show a composition bias toward basic and acidic residues; sequence SPLKEESLAREDS. Residues 212-246 form a disordered region; that stretch reads SPLKEESLAREDSPLSSPSSQPGTPDEQLVLGKKG. Residues 225–234 show a composition bias toward polar residues; that stretch reads PLSSPSSQPG. At T235 the chain carries Phosphothreonine. A binds actin region spans residues 263-282; it reads KIRKGNTKQRIDEFESMMHL.

As to quaternary structure, binds actin. Expressed specifically by the oligodendrocytes. Highest expression seen in the spinal cord followed by brainstem, cerebellum, thalamus, and hypothalamus. In the myelin sheath, found mainly in the abaxon and the lateral few terminal loops. Its apposition to the myelinated axon, through the latter, defines an axonal subregion, termed juxtanode, at the Ranvier node-paranode junction.

It is found in the cytoplasm. The protein localises to the cytoskeleton. Plays a role in cytoskeletal rearrangements during the late wrapping and/or compaction phases of myelinogenesis as well as in maintenance and stability of myelin sheath in the adult. May play an important role in late-stage oligodendroglia maturation, myelin/Ranvier node formation during CNS development, and in the maintenance and plasticity of related structures in the mature CNS. This Rattus norvegicus (Rat) protein is Ermin (Ermn).